The primary structure comprises 78 residues: Small ribosomal subunit protein bS18 (78 aa).

This sequence belongs to the bacterial ribosomal protein bS18 family. As to quaternary structure, part of the 30S ribosomal subunit. Forms a tight heterodimer with protein bS6.

Its function is as follows. Binds as a heterodimer with protein bS6 to the central domain of the 16S rRNA, where it helps stabilize the platform of the 30S subunit. The sequence is that of Small ribosomal subunit protein bS18 from Limosilactobacillus reuteri (strain DSM 20016) (Lactobacillus reuteri).